A 479-amino-acid polypeptide reads, in one-letter code: Aspartyl/glutamyl-tRNA(Asn/Gln) amidotransferase subunit B (479 aa).

Belongs to the GatB/GatE family. GatB subfamily. In terms of assembly, heterotrimer of A, B and C subunits.

The enzyme catalyses L-glutamyl-tRNA(Gln) + L-glutamine + ATP + H2O = L-glutaminyl-tRNA(Gln) + L-glutamate + ADP + phosphate + H(+). The catalysed reaction is L-aspartyl-tRNA(Asn) + L-glutamine + ATP + H2O = L-asparaginyl-tRNA(Asn) + L-glutamate + ADP + phosphate + 2 H(+). Allows the formation of correctly charged Asn-tRNA(Asn) or Gln-tRNA(Gln) through the transamidation of misacylated Asp-tRNA(Asn) or Glu-tRNA(Gln) in organisms which lack either or both of asparaginyl-tRNA or glutaminyl-tRNA synthetases. The reaction takes place in the presence of glutamine and ATP through an activated phospho-Asp-tRNA(Asn) or phospho-Glu-tRNA(Gln). The polypeptide is Aspartyl/glutamyl-tRNA(Asn/Gln) amidotransferase subunit B (Geotalea daltonii (strain DSM 22248 / JCM 15807 / FRC-32) (Geobacter daltonii)).